We begin with the raw amino-acid sequence, 588 residues long: Ribonuclease Y (588 aa).

A helical transmembrane segment spans residues 7–27 (VLLVAVLLLALIVLGAVLVGV). Positions 130–162 (ARRSGEREAAVLATTTREQAAEVERRAARMDDR) are disordered. The segment covering 148 to 162 (QAAEVERRAARMDDR) has biased composition (basic and acidic residues). In terms of domain architecture, KH spans 278 to 359 (VVSVLHLPGD…HRIEEVHDLA (82 aa)). Residues 404–497 (VLKHLVETAH…TQASDACSGG (94 aa)) enclose the HD domain.

This sequence belongs to the RNase Y family.

It localises to the cell membrane. Endoribonuclease that initiates mRNA decay. In Salinispora arenicola (strain CNS-205), this protein is Ribonuclease Y.